An 87-amino-acid chain; its full sequence is uncharacterized protein (87 aa).

The helical transmembrane segment at Leu-13–Ile-33 threads the bilayer. The disordered stretch occupies residues Glu-66–Val-87. The segment covering Lys-78–Val-87 has biased composition (basic residues).

The protein localises to the membrane. This is an uncharacterized protein from Caenorhabditis elegans.